The following is a 360-amino-acid chain: Histidinol-phosphate aminotransferase (360 aa).

K211 carries the N6-(pyridoxal phosphate)lysine modification.

It belongs to the class-II pyridoxal-phosphate-dependent aminotransferase family. Histidinol-phosphate aminotransferase subfamily. As to quaternary structure, homodimer. The cofactor is pyridoxal 5'-phosphate.

It carries out the reaction L-histidinol phosphate + 2-oxoglutarate = 3-(imidazol-4-yl)-2-oxopropyl phosphate + L-glutamate. Its pathway is amino-acid biosynthesis; L-histidine biosynthesis; L-histidine from 5-phospho-alpha-D-ribose 1-diphosphate: step 7/9. The sequence is that of Histidinol-phosphate aminotransferase from Sodalis glossinidius (strain morsitans).